Reading from the N-terminus, the 556-residue chain is Glypican-4 (556 aa).

The signal sequence occupies residues Met-1–Ala-18. Position 357 is a phosphoserine (Ser-357). 3 O-linked (Xyl...) (glycosaminoglycan) serine glycosylation sites follow: Ser-494, Ser-498, and Ser-500. An N-linked (GlcNAc...) asparagine glycan is attached at Asn-514. Ser-529 carries GPI-anchor amidated serine lipidation. Positions Ala-530–Arg-556 are cleaved as a propeptide — removed in mature form.

It belongs to the glypican family.

Its subcellular location is the cell membrane. It is found in the secreted. The protein resides in the extracellular space. Cell surface proteoglycan that bears heparan sulfate. May be involved in the development of kidney tubules and of the central nervous system. The sequence is that of Glypican-4 (GPC4) from Homo sapiens (Human).